Here is a 199-residue protein sequence, read N- to C-terminus: Peptidyl-tRNA hydrolase (199 aa).

Position 18 (Tyr18) interacts with tRNA. The Proton acceptor role is filled by His23. Positions 72, 74, and 120 each coordinate tRNA.

The protein belongs to the PTH family. Monomer.

It is found in the cytoplasm. The enzyme catalyses an N-acyl-L-alpha-aminoacyl-tRNA + H2O = an N-acyl-L-amino acid + a tRNA + H(+). Functionally, hydrolyzes ribosome-free peptidyl-tRNAs (with 1 or more amino acids incorporated), which drop off the ribosome during protein synthesis, or as a result of ribosome stalling. Its function is as follows. Catalyzes the release of premature peptidyl moieties from peptidyl-tRNA molecules trapped in stalled 50S ribosomal subunits, and thus maintains levels of free tRNAs and 50S ribosomes. This is Peptidyl-tRNA hydrolase from Bifidobacterium longum (strain DJO10A).